The chain runs to 317 residues: Aspartate carbamoyltransferase catalytic subunit (317 aa).

The carbamoyl phosphate site is built by Arg-64 and Thr-65. An L-aspartate-binding site is contributed by Lys-92. Arg-114, His-142, and Gln-145 together coordinate carbamoyl phosphate. L-aspartate contacts are provided by Arg-176 and Arg-230. Residues Gly-271 and Pro-272 each coordinate carbamoyl phosphate.

The protein belongs to the aspartate/ornithine carbamoyltransferase superfamily. ATCase family. In terms of assembly, heterododecamer (2C3:3R2) of six catalytic PyrB chains organized as two trimers (C3), and six regulatory PyrI chains organized as three dimers (R2).

It catalyses the reaction carbamoyl phosphate + L-aspartate = N-carbamoyl-L-aspartate + phosphate + H(+). It functions in the pathway pyrimidine metabolism; UMP biosynthesis via de novo pathway; (S)-dihydroorotate from bicarbonate: step 2/3. Catalyzes the condensation of carbamoyl phosphate and aspartate to form carbamoyl aspartate and inorganic phosphate, the committed step in the de novo pyrimidine nucleotide biosynthesis pathway. The protein is Aspartate carbamoyltransferase catalytic subunit of Nitratidesulfovibrio vulgaris (strain ATCC 29579 / DSM 644 / CCUG 34227 / NCIMB 8303 / VKM B-1760 / Hildenborough) (Desulfovibrio vulgaris).